We begin with the raw amino-acid sequence, 362 residues long: Adenosine deaminase (362 aa).

Residues His41 and His43 each contribute to the Zn(2+) site. 43–45 (HLD) is an a purine D-ribonucleoside binding site. Residues 169 to 183 (IGETGISEESLRKAA) form a gating helix loop; regulates binding affinity for substrates and thus substrate selectivity region. Gly200 serves as a coordination point for a purine D-ribonucleoside. His225 contributes to the Zn(2+) binding site. Positions 228, 252, and 309 each coordinate a purine D-ribonucleoside. Residue Asp309 coordinates Zn(2+).

The protein belongs to the metallo-dependent hydrolases superfamily. Adenosine and AMP deaminases family. Zn(2+) is required as a cofactor.

It carries out the reaction adenosine + H2O + H(+) = inosine + NH4(+). Its pathway is purine metabolism; purine nucleoside salvage. Inhibited by coformycin but not by methylthiocoformycin (MT-coformycin). Catalyzes the hydrolytic deamination of adenosine to produce inosine. Unlike other Plasmodium adenosine deaminases, does not catalyze the deamination of 5'-methylthioadenosine (MTA). Plays an essential role in the purine salvage pathway which allows the parasite to use host cell purines for the synthesis of nucleic acids. This is Adenosine deaminase from Plasmodium gallinaceum.